A 291-amino-acid chain; its full sequence is DNA repair protein RecO (291 aa).

This sequence belongs to the RecO family.

Its function is as follows. Involved in DNA repair and RecF pathway recombination. This is DNA repair protein RecO from Cupriavidus pinatubonensis (strain JMP 134 / LMG 1197) (Cupriavidus necator (strain JMP 134)).